The primary structure comprises 445 residues: Enolase 2 (445 aa).

Residues histidine 164 and glutamate 173 each contribute to the substrate site. Glutamate 216 serves as the catalytic Proton donor. Mg(2+) is bound by residues aspartate 251, glutamate 301, and aspartate 328. Residues glutamate 301 and aspartate 328 each coordinate substrate. The active-site Proton acceptor is lysine 353. Substrate is bound by residues 380–383 (SHRS) and lysine 404.

The protein belongs to the enolase family. Homodimer. Requires Mg(2+) as cofactor.

Its subcellular location is the cytoplasm. The catalysed reaction is (2R)-2-phosphoglycerate = phosphoenolpyruvate + H2O. The protein operates within carbohydrate degradation; glycolysis; pyruvate from D-glyceraldehyde 3-phosphate: step 4/5. This Hevea brasiliensis (Para rubber tree) protein is Enolase 2 (ENO2).